We begin with the raw amino-acid sequence, 418 residues long: Actin-related protein 3-B (418 aa).

The protein belongs to the actin family. ARP3 subfamily. In terms of assembly, component of the Arp2/3 complex composed of actr2/arp2, actr3/arp3, arpc1 (arpc1a or arpc1b), arpc2, arpc3, arpc4 and arpc5.

Its subcellular location is the cytoplasm. It localises to the cytoskeleton. It is found in the cell projection. The protein localises to the nucleus. In terms of biological role, ATP-binding component of the Arp2/3 complex, a multiprotein complex that mediates actin polymerization upon stimulation by nucleation-promoting factor (NPF). The Arp2/3 complex mediates the formation of branched actin networks in the cytoplasm, providing the force for cell motility. Seems to contact the pointed end of the daughter actin filament. In addition to its role in the cytoplasmic cytoskeleton, the Arp2/3 complex also promotes actin polymerization in the nucleus, thereby regulating gene transcription and repair of damaged DNA. The Arp2/3 complex promotes homologous recombination (HR) repair in response to DNA damage by promoting nuclear actin polymerization, leading to drive motility of double-strand breaks (DSBs). The chain is Actin-related protein 3-B (actr3-b) from Xenopus laevis (African clawed frog).